The following is a 64-amino-acid chain: Beta-insect depressant toxin BmKIT4 (64 aa).

The LCN-type CS-alpha/beta domain occupies 1-61 (DGYIRGSNGC…TWKSESNTCG (61 aa)). Cystine bridges form between C10–C60, C14–C35, C21–C42, and C25–C44. C60 is subject to Cysteine amide.

Belongs to the long (4 C-C) scorpion toxin superfamily. Sodium channel inhibitor family. Beta subfamily. As to expression, expressed by the venom gland.

It is found in the secreted. Depressant insect beta-toxins cause a transient contraction paralysis followed by a slow flaccid paralysis. They bind voltage-independently at site-4 of sodium channels (Nav) and shift the voltage of activation toward more negative potentials thereby affecting sodium channel activation and promoting spontaneous and repetitive firing. This toxin is active only on insects. The chain is Beta-insect depressant toxin BmKIT4 from Olivierus martensii (Manchurian scorpion).